We begin with the raw amino-acid sequence, 286 residues long: D-tagatose-1,6-bisphosphate aldolase subunit KbaY (286 aa).

Residue D82 is the Proton donor of the active site. The Zn(2+) site is built by H83 and H180. G181 provides a ligand contact to dihydroxyacetone phosphate. Position 208 (H208) interacts with Zn(2+). Dihydroxyacetone phosphate is bound by residues 209-211 (GAS) and 230-233 (NVAT).

This sequence belongs to the class II fructose-bisphosphate aldolase family. TagBP aldolase KbaY subfamily. As to quaternary structure, homotetramer. Forms a complex with KbaZ. The cofactor is Zn(2+).

It carries out the reaction D-tagatofuranose 1,6-bisphosphate = D-glyceraldehyde 3-phosphate + dihydroxyacetone phosphate. It functions in the pathway carbohydrate metabolism; D-tagatose 6-phosphate degradation; D-glyceraldehyde 3-phosphate and glycerone phosphate from D-tagatose 6-phosphate: step 2/2. Functionally, catalytic subunit of the tagatose-1,6-bisphosphate aldolase KbaYZ, which catalyzes the reversible aldol condensation of dihydroxyacetone phosphate (DHAP or glycerone-phosphate) with glyceraldehyde 3-phosphate (G3P) to produce tagatose 1,6-bisphosphate (TBP). Requires KbaZ subunit for full activity and stability. In Escherichia coli O127:H6 (strain E2348/69 / EPEC), this protein is D-tagatose-1,6-bisphosphate aldolase subunit KbaY.